We begin with the raw amino-acid sequence, 149 residues long: 6,7-dimethyl-8-ribityllumazine synthase (149 aa).

5-amino-6-(D-ribitylamino)uracil-binding positions include phenylalanine 22, 56–58 (ALE), and 80–82 (AVI). Residue 85 to 86 (ET) participates in (2S)-2-hydroxy-3-oxobutyl phosphate binding. Histidine 88 acts as the Proton donor in catalysis. Asparagine 113 provides a ligand contact to 5-amino-6-(D-ribitylamino)uracil. A (2S)-2-hydroxy-3-oxobutyl phosphate-binding site is contributed by arginine 127.

This sequence belongs to the DMRL synthase family.

The enzyme catalyses (2S)-2-hydroxy-3-oxobutyl phosphate + 5-amino-6-(D-ribitylamino)uracil = 6,7-dimethyl-8-(1-D-ribityl)lumazine + phosphate + 2 H2O + H(+). It functions in the pathway cofactor biosynthesis; riboflavin biosynthesis; riboflavin from 2-hydroxy-3-oxobutyl phosphate and 5-amino-6-(D-ribitylamino)uracil: step 1/2. In terms of biological role, catalyzes the formation of 6,7-dimethyl-8-ribityllumazine by condensation of 5-amino-6-(D-ribitylamino)uracil with 3,4-dihydroxy-2-butanone 4-phosphate. This is the penultimate step in the biosynthesis of riboflavin. This Methylobacillus flagellatus (strain ATCC 51484 / DSM 6875 / VKM B-1610 / KT) protein is 6,7-dimethyl-8-ribityllumazine synthase.